The sequence spans 364 residues: Paraneoplastic antigen Ma2 (364 aa).

Ala2 is modified (N-acetylalanine). Acidic residues predominate over residues 335-351 (EEEEASFENESIEEPEE). The disordered stretch occupies residues 335 to 364 (EEEEASFENESIEEPEERDGYGRWNHEGDD). The span at 352 to 364 (RDGYGRWNHEGDD) shows a compositional bias: basic and acidic residues.

It belongs to the PNMA family. As to expression, brain-specific. In some cancer patients, specifically expressed by testicular tumor cells.

It localises to the nucleus. The protein localises to the nucleolus. This is Paraneoplastic antigen Ma2 (PNMA2) from Homo sapiens (Human).